Reading from the N-terminus, the 219-residue chain is Probable GTP-binding protein EngB (219 aa).

The region spanning 24-207 is the EngB-type G domain; the sequence is VQPEIAFAGR…HELIESWLRP (184 aa). Residues 32–39, 59–63, 81–84, 148–151, and 186–188 each bind GTP; these read GRSNAGKS, GRTQH, DLPG, TKCD, and FSA. The Mg(2+) site is built by S39 and T61.

The protein belongs to the TRAFAC class TrmE-Era-EngA-EngB-Septin-like GTPase superfamily. EngB GTPase family. Mg(2+) serves as cofactor.

Necessary for normal cell division and for the maintenance of normal septation. The sequence is that of Probable GTP-binding protein EngB from Burkholderia cenocepacia (strain HI2424).